Consider the following 183-residue polypeptide: Ribosome-recycling factor (183 aa).

This sequence belongs to the RRF family.

The protein localises to the cytoplasm. In terms of biological role, responsible for the release of ribosomes from messenger RNA at the termination of protein biosynthesis. May increase the efficiency of translation by recycling ribosomes from one round of translation to another. This is Ribosome-recycling factor from Deinococcus radiodurans (strain ATCC 13939 / DSM 20539 / JCM 16871 / CCUG 27074 / LMG 4051 / NBRC 15346 / NCIMB 9279 / VKM B-1422 / R1).